A 655-amino-acid chain; its full sequence is Probable glucan endo-1,3-beta-glucosidase btgC (655 aa).

Disordered regions lie at residues methionine 1–glycine 61 and serine 89–aspartate 114. At methionine 1 to arginine 282 the chain is on the cytoplasmic side. The segment covering aspartate 19–aspartate 33 has biased composition (polar residues). Residues serine 89–aspartate 98 show a composition bias toward basic and acidic residues. A helical; Signal-anchor for type II membrane protein membrane pass occupies residues glycine 283–valine 303. Topologically, residues glycine 304 to threonine 655 are extracellular. Residues glycine 305 to isoleucine 338 are disordered. The segment covering glycine 323–isoleucine 338 has biased composition (basic and acidic residues). N-linked (GlcNAc...) asparagine glycosylation occurs at asparagine 426. Glutamate 458 acts as the Proton donor in catalysis. The active-site Nucleophile is the glutamate 557. N-linked (GlcNAc...) asparagine glycans are attached at residues asparagine 576 and asparagine 602.

Belongs to the glycosyl hydrolase 17 family.

It localises to the cell membrane. The enzyme catalyses Hydrolysis of (1-&gt;3)-beta-D-glucosidic linkages in (1-&gt;3)-beta-D-glucans.. In terms of biological role, glucanases play a role in cell expansion during growth, in cell-cell fusion during mating, and in spore release during sporulation. This enzyme may be involved in beta-glucan degradation. Active on laminarin and lichenan. In Aspergillus terreus (strain NIH 2624 / FGSC A1156), this protein is Probable glucan endo-1,3-beta-glucosidase btgC (btgC).